We begin with the raw amino-acid sequence, 424 residues long: 3-phosphoshikimate 1-carboxyvinyltransferase (424 aa).

Lysine 21, serine 22, and arginine 26 together coordinate 3-phosphoshikimate. Lysine 21 is a phosphoenolpyruvate binding site. 2 residues coordinate phosphoenolpyruvate: glycine 92 and arginine 120. 3-phosphoshikimate contacts are provided by serine 163, serine 164, glutamine 165, serine 191, aspartate 306, and lysine 333. Glutamine 165 provides a ligand contact to phosphoenolpyruvate. The active-site Proton acceptor is aspartate 306. 3 residues coordinate phosphoenolpyruvate: arginine 337, arginine 379, and lysine 405.

It belongs to the EPSP synthase family. Monomer.

It localises to the cytoplasm. The catalysed reaction is 3-phosphoshikimate + phosphoenolpyruvate = 5-O-(1-carboxyvinyl)-3-phosphoshikimate + phosphate. The protein operates within metabolic intermediate biosynthesis; chorismate biosynthesis; chorismate from D-erythrose 4-phosphate and phosphoenolpyruvate: step 6/7. Functionally, catalyzes the transfer of the enolpyruvyl moiety of phosphoenolpyruvate (PEP) to the 5-hydroxyl of shikimate-3-phosphate (S3P) to produce enolpyruvyl shikimate-3-phosphate and inorganic phosphate. The chain is 3-phosphoshikimate 1-carboxyvinyltransferase from Clostridium perfringens (strain ATCC 13124 / DSM 756 / JCM 1290 / NCIMB 6125 / NCTC 8237 / Type A).